A 200-amino-acid polypeptide reads, in one-letter code: NAD(P)H dehydrogenase (quinone) (200 aa).

The Flavodoxin-like domain maps to 4–191 (LLVLYYSMYG…TIARFQGEHV (188 aa)). FMN is bound by residues 10-15 (SMYGHV) and 79-81 (TRF). NAD(+) is bound at residue Tyr12. Trp99 lines the substrate pocket. FMN contacts are provided by residues 114–120 (STASQHG) and His135.

The protein belongs to the WrbA family. FMN serves as cofactor.

It catalyses the reaction a quinone + NADH + H(+) = a quinol + NAD(+). It carries out the reaction a quinone + NADPH + H(+) = a quinol + NADP(+). The sequence is that of NAD(P)H dehydrogenase (quinone) from Nitrosococcus oceani (strain ATCC 19707 / BCRC 17464 / JCM 30415 / NCIMB 11848 / C-107).